We begin with the raw amino-acid sequence, 348 residues long: Putative methylesterase 14, chloroplastic (348 aa).

2 disordered regions span residues 1-29 and 60-80; these read MGNKIISMMKKDSKDGGGGGSKSKRMNRS and GSMSRRVGSTSTRKRTLSDPF. The transit peptide at 1–76 directs the protein to the chloroplast; that stretch reads MGNKIISMMK…GSTSTRKRTL (76 aa). Ser77 carries the phosphoserine modification. Ser172 (acyl-ester intermediate) is an active-site residue. Active-site charge relay system residues include Asp299 and His327.

The protein belongs to the AB hydrolase superfamily. Methylesterase family.

Its subcellular location is the plastid. The protein localises to the chloroplast. Functionally, putative methylesterase. In Arabidopsis thaliana (Mouse-ear cress), this protein is Putative methylesterase 14, chloroplastic.